We begin with the raw amino-acid sequence, 102 residues long: Large ribosomal subunit protein bL21 (102 aa).

The protein belongs to the bacterial ribosomal protein bL21 family. As to quaternary structure, part of the 50S ribosomal subunit. Contacts protein L20.

Functionally, this protein binds to 23S rRNA in the presence of protein L20. The chain is Large ribosomal subunit protein bL21 from Geobacillus sp. (strain WCH70).